The primary structure comprises 1253 residues: Myosin-1 (1253 aa).

The segment at 1-40 (MGHSRRPVGGEKKSRGFGRSKAAADVGDGRQAGKPQVKKA) is disordered. One can recognise a Myosin motor domain in the interval 50-729 (IGVSDLTLLS…TLFALEAMRD (680 aa)). An ATP-binding site is contributed by 143-150 (GESGAGKT). Ser-371 is subject to Phosphoserine. The interval 418-500 (SIGILDIYGF…PGVFAALNDA (83 aa)) is actin-binding. 2 consecutive IQ domains span residues 733 to 753 (HNMA…RIEC) and 754 to 779 (ATRI…QGHQ). One can recognise a TH1 domain in the interval 787–977 (RRRMSLLGSR…TIHTGAGEPA (191 aa)). 2 disordered regions span residues 959 to 1083 (TGDD…PKKP) and 1139 to 1253 (QVAP…DDDW). Over residues 1029–1055 (PQPAAAQPAAPQPAARVVPQPVAAVAA) the composition is skewed to low complexity. Pro residues-rich tracts occupy residues 1068 to 1081 (APPP…PAPK) and 1143 to 1155 (APKP…PPAA). The SH3 domain occupies 1080 to 1141 (PKKPTAKALY…PEAYLEEQVA (62 aa)). Low complexity-rich tracts occupy residues 1156–1173 (PRST…AKAK) and 1221–1235 (NSAS…LAEA).

Belongs to the TRAFAC class myosin-kinesin ATPase superfamily. Myosin family. In terms of processing, phosphorylation of the TEDS site (Ser-371) is required for the polarization of the actin cytoskeleton. Phosphorylation probably activates the myosin-I ATPase activity.

Its subcellular location is the cytoplasm. The protein resides in the cytoskeleton. It localises to the actin patch. Functionally, type-I myosin implicated in the organization of the actin cytoskeleton. Required for proper actin cytoskeleton polarization. At the cell cortex, assembles in patch-like structures together with proteins from the actin-polymerizing machinery and promotes actin assembly. Functions as actin nucleation-promoting factor (NPF) for the Arp2/3 complex. Plays an important role in polarized growth, spore germination, hyphal morphogenesis, and septal wall formation. This Aspergillus clavatus (strain ATCC 1007 / CBS 513.65 / DSM 816 / NCTC 3887 / NRRL 1 / QM 1276 / 107) protein is Myosin-1 (myoA).